The primary structure comprises 240 residues: Methylthioribulose-1-phosphate dehydratase (240 aa).

Cys99 contributes to the substrate binding site. His116 and His118 together coordinate Zn(2+). The active-site Proton donor/acceptor is Glu145. Zn(2+) is bound at residue His201.

The protein belongs to the aldolase class II family. MtnB subfamily. It depends on Zn(2+) as a cofactor.

The protein localises to the cytoplasm. The catalysed reaction is 5-(methylsulfanyl)-D-ribulose 1-phosphate = 5-methylsulfanyl-2,3-dioxopentyl phosphate + H2O. It participates in amino-acid biosynthesis; L-methionine biosynthesis via salvage pathway; L-methionine from S-methyl-5-thio-alpha-D-ribose 1-phosphate: step 2/6. Functionally, catalyzes the dehydration of methylthioribulose-1-phosphate (MTRu-1-P) into 2,3-diketo-5-methylthiopentyl-1-phosphate (DK-MTP-1-P). The polypeptide is Methylthioribulose-1-phosphate dehydratase (Ajellomyces capsulatus (strain G186AR / H82 / ATCC MYA-2454 / RMSCC 2432) (Darling's disease fungus)).